The primary structure comprises 100 residues: Urease subunit gamma (100 aa).

This sequence belongs to the urease gamma subunit family. As to quaternary structure, heterotrimer of UreA (gamma), UreB (beta) and UreC (alpha) subunits. Three heterotrimers associate to form the active enzyme.

It localises to the cytoplasm. It catalyses the reaction urea + 2 H2O + H(+) = hydrogencarbonate + 2 NH4(+). The protein operates within nitrogen metabolism; urea degradation; CO(2) and NH(3) from urea (urease route): step 1/1. The sequence is that of Urease subunit gamma from Streptomyces coelicolor (strain ATCC BAA-471 / A3(2) / M145).